We begin with the raw amino-acid sequence, 91 residues long: Protein transport protein Sec61 subunit beta (91 aa).

Residues 1–45 (MSTSAQVPGGPAAQMKRRNNAQRQEAKASQRPTSTRSVGAGGSSS) form a disordered region. Topologically, residues 1-62 (MSTSAQVPGG…DESQGLKVDP (62 aa)) are cytoplasmic. The span at 30–45 (QRPTSTRSVGAGGSSS) shows a compositional bias: polar residues. The helical transmembrane segment at 63 to 83 (VVVMVLSLGFIFSVVALHILA) threads the bilayer.

This sequence belongs to the SEC61-beta family. In terms of assembly, heterotrimeric complex composed of SEC61, SEB1 and SSS1.

It is found in the endoplasmic reticulum membrane. In terms of biological role, necessary for protein translocation in the endoplasmic reticulum. The chain is Protein transport protein Sec61 subunit beta (SBH1) from Yarrowia lipolytica (strain CLIB 122 / E 150) (Yeast).